A 348-amino-acid polypeptide reads, in one-letter code: Nicotinate-nucleotide--dimethylbenzimidazole phosphoribosyltransferase (348 aa).

Glutamate 315 serves as the catalytic Proton acceptor.

Belongs to the CobT family.

The enzyme catalyses 5,6-dimethylbenzimidazole + nicotinate beta-D-ribonucleotide = alpha-ribazole 5'-phosphate + nicotinate + H(+). Its pathway is nucleoside biosynthesis; alpha-ribazole biosynthesis; alpha-ribazole from 5,6-dimethylbenzimidazole: step 1/2. In terms of biological role, catalyzes the synthesis of alpha-ribazole-5'-phosphate from nicotinate mononucleotide (NAMN) and 5,6-dimethylbenzimidazole (DMB). The polypeptide is Nicotinate-nucleotide--dimethylbenzimidazole phosphoribosyltransferase (Dechloromonas aromatica (strain RCB)).